Reading from the N-terminus, the 59-residue chain is Ferredoxin-2 (59 aa).

4Fe-4S ferredoxin-type domains are found at residues 3–32 (YSVI…LQNG) and 33–59 (KAVP…AIVE). The [4Fe-4S] cluster site is built by cysteine 12, cysteine 15, cysteine 18, cysteine 22, cysteine 42, cysteine 45, cysteine 48, and cysteine 52.

In terms of assembly, homodimer. The cofactor is [4Fe-4S] cluster.

It is found in the periplasm. Its function is as follows. Ferredoxins are iron-sulfur proteins that transfer electrons in a wide variety of metabolic reactions. This Desulfomicrobium norvegicum (strain DSM 1741 / NCIMB 8310) (Desulfovibrio baculatus (strain Norway 4)) protein is Ferredoxin-2.